Reading from the N-terminus, the 75-residue chain is Defensin-like protein (75 aa).

An N-terminal signal peptide occupies residues Met1–Val24. 4 disulfides stabilise this stretch: Cys31–Cys75, Cys42–Cys63, Cys48–Cys69, and Cys52–Cys71.

The protein belongs to the DEFL family.

Its subcellular location is the secreted. This protein is required for germination. The sequence is that of Defensin-like protein from Vigna unguiculata (Cowpea).